A 192-amino-acid polypeptide reads, in one-letter code: Small ribosomal subunit protein eS7 (192 aa).

This sequence belongs to the eukaryotic ribosomal protein eS7 family.

This is Small ribosomal subunit protein eS7 (RpS7) from Anopheles gambiae (African malaria mosquito).